The chain runs to 240 residues: uncharacterized protein (240 aa).

Residues 73–93 form a helical membrane-spanning segment; it reads LLGCLYFFIYFVAPTLGPVLF.

The protein belongs to the universal ribosomal protein uS3 family.

It localises to the mitochondrion membrane. This is an uncharacterized protein from Arabidopsis thaliana (Mouse-ear cress).